An 853-amino-acid chain; its full sequence is Wolframin (853 aa).

The segment at 139 to 179 (KQLERKMRRIYNLQRKRRRRDDDRSSSSSEGEQEPECEPLE) is disordered. Over residues 144–157 (KMRRIYNLQRKRRR) the composition is skewed to basic residues. Acidic residues predominate over residues 169–179 (GEQEPECEPLE). 10 helical membrane-spanning segments follow: residues 238 to 258 (MIFH…NLIV), 259 to 279 (SIPN…ISWW), 285 to 305 (LPLV…CKML), 347 to 367 (LYFF…TDAW), 373 to 393 (LTII…YASS), 446 to 466 (FCLN…IMMA), 473 to 493 (GVYT…VCIA), 513 to 533 (IVLF…FVAI), 545 to 565 (WGST…LALN), and 572 to 592 (ITML…LPYM). Residues Asn694 and Asn769 are each glycosylated (N-linked (GlcNAc...) asparagine).

As to expression, detected in adult brain.

It localises to the membrane. The protein localises to the endoplasmic reticulum. The protein resides in the mitochondrion. Its function is as follows. Participates in the regulation of cellular Ca(2+) homeostasis, at least partly, by modulating the filling state of the endoplasmic reticulum Ca(2+) store. In neurons and glial cells, has a role in maintaining neuronal function and integrity during aging. In Drosophila melanogaster (Fruit fly), this protein is Wolframin.